The following is a 259-amino-acid chain: Ribosomal RNA small subunit methyltransferase A (259 aa).

Positions 13, 15, 40, 61, 85, and 103 each coordinate S-adenosyl-L-methionine.

It belongs to the class I-like SAM-binding methyltransferase superfamily. rRNA adenine N(6)-methyltransferase family. RsmA subfamily.

It localises to the cytoplasm. The catalysed reaction is adenosine(1518)/adenosine(1519) in 16S rRNA + 4 S-adenosyl-L-methionine = N(6)-dimethyladenosine(1518)/N(6)-dimethyladenosine(1519) in 16S rRNA + 4 S-adenosyl-L-homocysteine + 4 H(+). Specifically dimethylates two adjacent adenosines (A1518 and A1519) in the loop of a conserved hairpin near the 3'-end of 16S rRNA in the 30S particle. May play a critical role in biogenesis of 30S subunits. The protein is Ribosomal RNA small subunit methyltransferase A of Neisseria gonorrhoeae (strain ATCC 700825 / FA 1090).